Here is a 226-residue protein sequence, read N- to C-terminus: Uracil-DNA glycosylase (226 aa).

Asp-68 serves as the catalytic Proton acceptor.

Belongs to the uracil-DNA glycosylase (UDG) superfamily. UNG family.

The protein localises to the cytoplasm. It carries out the reaction Hydrolyzes single-stranded DNA or mismatched double-stranded DNA and polynucleotides, releasing free uracil.. Excises uracil residues from the DNA which can arise as a result of misincorporation of dUMP residues by DNA polymerase or due to deamination of cytosine. This Mycobacteroides abscessus (strain ATCC 19977 / DSM 44196 / CCUG 20993 / CIP 104536 / JCM 13569 / NCTC 13031 / TMC 1543 / L948) (Mycobacterium abscessus) protein is Uracil-DNA glycosylase.